The chain runs to 110 residues: Phosphoribosyl-ATP pyrophosphatase (110 aa).

This sequence belongs to the PRA-PH family.

It is found in the cytoplasm. The enzyme catalyses 1-(5-phospho-beta-D-ribosyl)-ATP + H2O = 1-(5-phospho-beta-D-ribosyl)-5'-AMP + diphosphate + H(+). It participates in amino-acid biosynthesis; L-histidine biosynthesis; L-histidine from 5-phospho-alpha-D-ribose 1-diphosphate: step 2/9. In Clostridium acetobutylicum (strain ATCC 824 / DSM 792 / JCM 1419 / IAM 19013 / LMG 5710 / NBRC 13948 / NRRL B-527 / VKM B-1787 / 2291 / W), this protein is Phosphoribosyl-ATP pyrophosphatase (hisE).